The primary structure comprises 997 residues: MQEKKTLYLLDAYGLIYRSYHAFARAPLINDSGANVSAVYGFFRSLHTLLCHYRPRYFVAVFDSLTPTFRHVQYPAYKAKRDKTSAELYAQIPLIEEILCALGITVLRHDGFEADDLIATLAKRVAAEHCHVVIISSDKDVLQLVCDTVQVLRLDIDHKWTCCDAAYVQQRWTVMPTQLLDLFSLMGDSSDNVPGVRGIGPKTAAHLLHCFGTLDGIYRHTYSLKEALRTKIVCGKKDAFFSRSLIELRDDVPCVFSLEDSCCIPLDVTSAARIFVREGLHALAQQYRACVQEIDTEATNDTLQMTESSVLTSGRCANECFLSQVEGRASTPEVNSVLKSELKTSAVSGAIPIENRDLRQDVMLARSAGHYRGVTDPVELKRIIDCACANGVVAFDCETDGLHPHDTRLVGFSICFQEAEAFYVPLIVPDVSLHTESTQCTCARSTNVETEKECTEQHGVSASAVQDPAYVQAVMHQLRRLWNDETLTLVMHNGKFDYHVMHRAGVFEHCACNIFDTMVAAWLLDPDRGTYGMDVLAASFFQIRTITFEEVVAKGQTFAHVPYECAVRYAAEDADITFRLYHYLKLRLETAGLLSVFETIEMPLLPILARMEEVGIFLRKDVVQQLTRSFSDLIQQYEHDIFSLAGHEFNIGSPKQLQTVLFQELHLPPGKKNTQGYSTDHSVLKKLARKHPIAEKILLFRDLSKLRSTYTESLAKLADQTGRVHTSFVQIGTATGRLSSRNPNLQNIPIKSTEGRKIRQAFQATVGHELISADYTQIELVVLAHLSQDRNLLNAFRQHIDIHALTAAYIFNVSIDDVQPAMRRIAKTINFGIVYGMSAFRLSDELKISQKEAQSFIYRYFETYPGVYAFSTQVAEQTRKTGYVTSLAGRRRYIRTIDSRNTLERARAERMALNTQIQSSAADIVKIAMIAIQRAFARRPLRAQLLLQVHDELIFEAPAAETAIVKEILFAEMEHAVELSIPLRIHVESGNSWGDFH.

The 5'-3' exonuclease domain occupies 174–261 (VMPTQLLDLF…VPCVFSLEDS (88 aa)). Positions 428-589 (VPDVSLHTES…LYHYLKLRLE (162 aa)) constitute a 3'-5' exonuclease domain.

This sequence belongs to the DNA polymerase type-A family.

The catalysed reaction is DNA(n) + a 2'-deoxyribonucleoside 5'-triphosphate = DNA(n+1) + diphosphate. In terms of biological role, in addition to polymerase activity, this DNA polymerase exhibits 3'-5' and 5'-3' exonuclease activity. This Treponema pallidum (strain Nichols) protein is DNA polymerase I (polA).